Consider the following 514-residue polypeptide: Embryonic protein UVS.2 (514 aa).

An N-terminal signal peptide occupies residues 1-19 (MDVKISAILLACIIQYAVS). One can recognise a Peptidase M12A domain in the interval 90-286 (SAINDARFLW…SKINKLYECN (197 aa)). N-linked (GlcNAc...) asparagine glycosylation occurs at Asn-112. Cystine bridges form between Cys-137-Cys-285, Cys-158-Cys-178, Cys-288-Cys-314, Cys-340-Cys-363, Cys-402-Cys-428, and Cys-455-Cys-475. His-186 is a binding site for Zn(2+). Glu-187 is a catalytic residue. Zn(2+)-binding residues include His-190 and His-196. N-linked (GlcNAc...) asparagine glycosylation occurs at Asn-199. CUB domains are found at residues 288 to 400 (CSNL…YGSI) and 402 to 513 (CGGA…YTFV). Residues Asn-421, Asn-427, and Asn-464 are each glycosylated (N-linked (GlcNAc...) asparagine).

Requires Zn(2+) as cofactor.

The sequence is that of Embryonic protein UVS.2 from Xenopus laevis (African clawed frog).